Here is a 91-residue protein sequence, read N- to C-terminus: Large ribosomal subunit protein eL34 (91 aa).

A disordered region spans residues 48-71; that stretch reads RGRPVEMRKLPKTKKRPERPYPHL.

It belongs to the eukaryotic ribosomal protein eL34 family.

The chain is Large ribosomal subunit protein eL34 (rpl34e) from Pyrococcus abyssi (strain GE5 / Orsay).